The following is a 160-amino-acid chain: CXXC motif containing zinc binding protein (160 aa).

Zn(2+) is bound by residues Cys33, Cys36, Cys67, and Cys70. Ser75 is modified (phosphoserine).

It belongs to the UPF0587 family. Monomer.

The polypeptide is CXXC motif containing zinc binding protein (Homo sapiens (Human)).